The sequence spans 575 residues: Muellerian-inhibiting factor (575 aa).

Residues 1 to 20 (MQGPSLSQLVLVLMGALLEA) form the signal peptide. A propeptide spanning residues 21 to 466 (GTPREEVSST…ERSGPARAQR (446 aa)) is cleaved from the precursor. 2 N-linked (GlcNAc...) asparagine glycosylation sites follow: N78 and N343. Disulfide bonds link C477-C541, C503-C572, and C507-C574.

Belongs to the TGF-beta family. Homodimer; disulfide-linked. Post-translationally, preproprotein is proteolytically processed to generate N- and C-terminal cleavage products that homodimerize and associate to form a biologically active non-covalent complex. Binding of the non-covalent complex to AMHR2 induces dissociation of the pro-region from the mature C-terminal dimer. The N-terminal portion of the protein, despite having no intrinsic activity, has the role of amplifying the activity of the C-terminus. In terms of tissue distribution, detected in fetal Sertoli cells. Expressed in granulosa cells of growing follicles but also in theca cells of preovulatory follicles and corpora lutea (at protein level).

It is found in the secreted. Functionally, plays an important role in several reproductive functions. Induces Muellerian duct regression during male fetal sexual differentiation and plays a role in Leydig cell differentiation and function. In female acts as a negative regulator of the primordial to primary follicle transition and decreases FSH sensitivity of growing follicles. AMH signals by binding to a specific type-II receptor, AMHR2, that heterodimerizes with type-I receptors (ACVR1 and BMPR1A), and recruiting SMAD proteins that are translocated to the nucleus to regulate target gene expression. This Sus scrofa (Pig) protein is Muellerian-inhibiting factor (AMH).